We begin with the raw amino-acid sequence, 416 residues long: Squalene synthase (416 aa).

2 residues coordinate NADP(+): arginine 52 and arginine 77. Mg(2+)-binding residues include aspartate 80, glutamate 83, and aspartate 84. Residue arginine 218 coordinates NADP(+). A helical transmembrane segment spans residues 284 to 304 (SVFNFCAIPQVMAIATLAACY). Lysine 315 and arginine 317 together coordinate NADP(+). A helical transmembrane segment spans residues 384 to 404 (PIYLSFIMLLAALSWQYLSTL).

Belongs to the phytoene/squalene synthase family. Mg(2+) is required as a cofactor.

The protein localises to the endoplasmic reticulum membrane. It catalyses the reaction 2 (2E,6E)-farnesyl diphosphate + NADPH + H(+) = squalene + 2 diphosphate + NADP(+). It carries out the reaction 2 (2E,6E)-farnesyl diphosphate + NADH + H(+) = squalene + 2 diphosphate + NAD(+). The catalysed reaction is presqualene diphosphate + NADH + H(+) = squalene + diphosphate + NAD(+). The enzyme catalyses presqualene diphosphate + NADPH + H(+) = squalene + diphosphate + NADP(+). It catalyses the reaction 2 (2E,6E)-farnesyl diphosphate = presqualene diphosphate + diphosphate. The protein operates within terpene metabolism; lanosterol biosynthesis; lanosterol from farnesyl diphosphate: step 1/3. Its function is as follows. Catalyzes the condensation of 2 farnesyl pyrophosphate (FPP) moieties to form squalene. Proceeds in two distinct steps. In the first half-reaction, two molecules of FPP react to form the stable presqualene diphosphate intermediate (PSQPP), with concomitant release of a proton and a molecule of inorganic diphosphate. In the second half-reaction, PSQPP undergoes heterolysis, isomerization, and reduction with NADPH or NADH to form squalene. It is the first committed enzyme of the sterol biosynthesis pathway. The sequence is that of Squalene synthase (Fdft1) from Mus musculus (Mouse).